A 269-amino-acid chain; its full sequence is Tryptophan synthase alpha chain (269 aa).

Catalysis depends on proton acceptor residues Glu50 and Asp61.

Belongs to the TrpA family. Tetramer of two alpha and two beta chains.

The enzyme catalyses (1S,2R)-1-C-(indol-3-yl)glycerol 3-phosphate + L-serine = D-glyceraldehyde 3-phosphate + L-tryptophan + H2O. It participates in amino-acid biosynthesis; L-tryptophan biosynthesis; L-tryptophan from chorismate: step 5/5. In terms of biological role, the alpha subunit is responsible for the aldol cleavage of indoleglycerol phosphate to indole and glyceraldehyde 3-phosphate. This chain is Tryptophan synthase alpha chain, found in Francisella tularensis subsp. tularensis (strain WY96-3418).